A 687-amino-acid polypeptide reads, in one-letter code: DNA-directed RNA polymerase subunit beta' (687 aa).

4 residues coordinate Zn(2+): Cys76, Cys78, Cys94, and Cys97. The Mg(2+) site is built by Asp496, Asp498, and Asp500.

This sequence belongs to the RNA polymerase beta' chain family. RpoC1 subfamily. In terms of assembly, in plastids the minimal PEP RNA polymerase catalytic core is composed of four subunits: alpha, beta, beta', and beta''. When a (nuclear-encoded) sigma factor is associated with the core the holoenzyme is formed, which can initiate transcription. The cofactor is Mg(2+). Zn(2+) serves as cofactor.

Its subcellular location is the plastid. It localises to the chloroplast. The enzyme catalyses RNA(n) + a ribonucleoside 5'-triphosphate = RNA(n+1) + diphosphate. DNA-dependent RNA polymerase catalyzes the transcription of DNA into RNA using the four ribonucleoside triphosphates as substrates. This Ipomoea purpurea (Common morning glory) protein is DNA-directed RNA polymerase subunit beta'.